The following is an 87-amino-acid chain: UPF0213 protein SYNAS_10430 (87 aa).

A GIY-YIG domain is found at 2 to 78 (SKNYVYILEC…KKMSRAEKLQ (77 aa)).

It belongs to the UPF0213 family.

The polypeptide is UPF0213 protein SYNAS_10430 (Syntrophus aciditrophicus (strain SB)).